Here is a 541-residue protein sequence, read N- to C-terminus: Multidrug transporter protein MdtP (541 aa).

14 helical membrane passes run 14-34 (LLITGLIIAMFFSALDGTIVG), 40-60 (IVGDLGGLSMMTWLTTAYLLT), 79-99 (IVYVSGLIIFMAASALCGMAN), 112-132 (GIGGGIMMPMAMIVIGDLFTG), 141-161 (VFGAIYGLASVIGPQIGGWIV), 168-188 (WVFYINLPVGIIAVIFIARGL), 201-221 (IAGIFTMIVGVVSLLLALSFG), 229-249 (SWQILGLFALALIGIVSFIIV), 273-293 (LIGFFMSIGMFGAITFVPFFM), 307-327 (IMTPMMISMIITSIIGGQLVY), 329-349 (IGIKPQIITGMLVMAGGFLLL), 359-379 (LVATSFMAIIGLGMGLVMPIL), 401-420 (FFRSIGGTFGITMLGAVMNA), and 492-512 (LHSVFYTGLIFIAVGAVFTLF).

This sequence belongs to the major facilitator superfamily. EmrB family.

Its subcellular location is the cell membrane. Its function is as follows. Multidrug efflux transporter. Contributes to resistance to several antibiotics, including fusidic acid, novobiocin, streptomycin and actinomycin, possibly by pumping these structurally unrelated antibiotics out of cells. This chain is Multidrug transporter protein MdtP, found in Bacillus subtilis (strain 168).